The chain runs to 279 residues: Protease HtpX homolog (279 aa).

Transmembrane regions (helical) follow at residues 4–24 (IFLF…VLAV) and 34–54 (GSLL…SLLM). Residue histidine 140 participates in Zn(2+) binding. Glutamate 141 is an active-site residue. Histidine 144 provides a ligand contact to Zn(2+). 2 helical membrane-spanning segments follow: residues 155–175 (LIQG…ANLI) and 189–209 (FLVS…IVMW). Residue glutamate 215 participates in Zn(2+) binding.

The protein belongs to the peptidase M48B family. Requires Zn(2+) as cofactor.

It is found in the cell inner membrane. This is Protease HtpX homolog from Neisseria meningitidis serogroup B (strain ATCC BAA-335 / MC58).